A 561-amino-acid polypeptide reads, in one-letter code: Putative transport protein KPK_3686 (561 aa).

Transmembrane regions (helical) follow at residues 8 to 28 (LLNGNYILLLFVVLALGLCLG), 37 to 57 (LGNSIGVLVVSLLLGQQHFAI), 66 to 86 (FMLFIFCVGVEAGPNFFSIFF), 94 to 114 (MLALVMVGSAMLIATVLGKVF), and 158 to 178 (HLSLGYALTYLVGLVSLIVGA). RCK C-terminal domains lie at 202-288 (LDTD…SFRN) and 292-373 (VFDR…RIGF). The next 5 helical transmembrane spans lie at 383 to 403 (LLAFCAFFIVGLMIGMITFQF), 406 to 426 (FSFGIGNAAGLLFAGIMLGFL), 447 to 467 (FGLMVFMAGVGLSAGAGINNG), 478 to 498 (AGLIVSLLPVVICFLFGAYVL), and 540 to 560 (AIANVLLTLAGTLIVIIWPGL).

This sequence belongs to the AAE transporter (TC 2.A.81) family. YbjL subfamily.

It is found in the cell membrane. The sequence is that of Putative transport protein KPK_3686 from Klebsiella pneumoniae (strain 342).